The primary structure comprises 317 residues: tRNA pseudouridine synthase B (317 aa).

Aspartate 47 (nucleophile) is an active-site residue.

Belongs to the pseudouridine synthase TruB family. Type 1 subfamily.

It carries out the reaction uridine(55) in tRNA = pseudouridine(55) in tRNA. Functionally, responsible for synthesis of pseudouridine from uracil-55 in the psi GC loop of transfer RNAs. This chain is tRNA pseudouridine synthase B, found in Vibrio atlanticus (strain LGP32) (Vibrio splendidus (strain Mel32)).